The following is a 150-amino-acid chain: Ribosomal RNA large subunit methyltransferase H (150 aa).

S-adenosyl-L-methionine-binding positions include Ala-100 and 118 to 123 (LSEMTF).

This sequence belongs to the RNA methyltransferase RlmH family. In terms of assembly, homodimer.

It localises to the cytoplasm. It carries out the reaction pseudouridine(1915) in 23S rRNA + S-adenosyl-L-methionine = N(3)-methylpseudouridine(1915) in 23S rRNA + S-adenosyl-L-homocysteine + H(+). Its function is as follows. Specifically methylates the pseudouridine at position 1915 (m3Psi1915) in 23S rRNA. The polypeptide is Ribosomal RNA large subunit methyltransferase H (Helicobacter pylori (strain Shi470)).